Here is a 184-residue protein sequence, read N- to C-terminus: Chaperone protein dnaJ 72 (184 aa).

A J domain is found at 3–73 (DHYQVLGVTR…LKRASYNAGS (71 aa)). The chain crosses the membrane as a helical span at residues 133 to 150 (FLLNLALAGGLYFAFTAI).

Belongs to the DnaJ family. C/III subfamily.

It is found in the membrane. Functionally, plays a continuous role in plant development probably in the structural organization of compartments. The chain is Chaperone protein dnaJ 72 (ATJ72) from Arabidopsis thaliana (Mouse-ear cress).